A 159-amino-acid polypeptide reads, in one-letter code: 2-C-methyl-D-erythritol 2,4-cyclodiphosphate synthase (159 aa).

The a divalent metal cation site is built by aspartate 10 and histidine 12. Residues aspartate 10–histidine 12 and histidine 37–serine 38 contribute to the 4-CDP-2-C-methyl-D-erythritol 2-phosphate site. Histidine 45 is a binding site for a divalent metal cation. 4-CDP-2-C-methyl-D-erythritol 2-phosphate-binding positions include aspartate 59–glycine 61, phenylalanine 64–aspartate 68, alanine 103–leucine 109, threonine 135–glutamate 138, phenylalanine 142, and arginine 145.

It belongs to the IspF family. Homotrimer. Requires a divalent metal cation as cofactor.

It carries out the reaction 4-CDP-2-C-methyl-D-erythritol 2-phosphate = 2-C-methyl-D-erythritol 2,4-cyclic diphosphate + CMP. It functions in the pathway isoprenoid biosynthesis; isopentenyl diphosphate biosynthesis via DXP pathway; isopentenyl diphosphate from 1-deoxy-D-xylulose 5-phosphate: step 4/6. Its function is as follows. Involved in the biosynthesis of isopentenyl diphosphate (IPP) and dimethylallyl diphosphate (DMAPP), two major building blocks of isoprenoid compounds. Catalyzes the conversion of 4-diphosphocytidyl-2-C-methyl-D-erythritol 2-phosphate (CDP-ME2P) to 2-C-methyl-D-erythritol 2,4-cyclodiphosphate (ME-CPP) with a corresponding release of cytidine 5-monophosphate (CMP). The chain is 2-C-methyl-D-erythritol 2,4-cyclodiphosphate synthase from Francisella tularensis subsp. holarctica (strain FTNF002-00 / FTA).